We begin with the raw amino-acid sequence, 242 residues long: Neuromodulin (242 aa).

The disordered stretch occupies residues 1–242; that stretch reads MLCCMRRTKQ…EEREADQEHA (242 aa). S-palmitoyl cysteine attachment occurs at residues Cys3 and Cys4. Residues 9 to 32 show a composition bias toward basic and acidic residues; that stretch reads KQVEKNDEDQKIEQDGIKPEDKAH. The IQ domain occupies 31–60; that stretch reads AHKAATKIQASFRGHITRKKLKGEKKGDAQ. At Ser41 the chain carries Phosphoserine; by PHK and PKC. Composition is skewed to basic and acidic residues over residues 66-84 and 98-117; these read GNEK…KEGE and KAEE…KGEG. Positions 142–157 are enriched in polar residues; sequence ETESATKASTDNSPSS. Ser154, Ser156, and Ser157 each carry phosphoserine. Residues 158-170 are compositionally biased toward basic and acidic residues; it reads KAEDAPAKEEPKQ. Over residues 171-203 the composition is skewed to low complexity; sequence ADVPAAVTAAAAATTPAAEDAAAKATAQPPTDA. A Phosphothreonine modification is found at Thr185. 2 positions are modified to phosphoserine; by CK2: Ser206 and Ser207. The segment covering 209-242 has biased composition (basic and acidic residues); it reads AEEKIEAVDETKPKESARQDEGKGEEREADQEHA.

It belongs to the neuromodulin family. As to quaternary structure, identified in a complex containing FGFR4, NCAM1, CDH2, PLCG1, FRS2, SRC, SHC1, GAP43 and CTTN. Interacts (via IQ domain) with calmodulin. Binds calmodulin with a greater affinity in the absence of Ca(2+) than in its presence. In terms of processing, phosphorylated. Phosphorylation of this protein by a protein kinase C is specifically correlated with certain forms of synaptic plasticity. Post-translationally, palmitoylated by ZDHHC3. Palmitoylation is regulated by ARF6 and is essential for plasma membrane association and axonal and dendritic filopodia induction. Deacylated by LYPLA2.

It localises to the cell membrane. Its subcellular location is the cell projection. The protein resides in the growth cone membrane. It is found in the synapse. The protein localises to the filopodium membrane. It localises to the perikaryon. Its subcellular location is the dendrite. The protein resides in the axon. It is found in the cytoplasm. Its function is as follows. This protein is associated with nerve growth. It is a major component of the motile 'growth cones' that form the tips of elongating axons. Plays a role in axonal and dendritic filopodia induction. The polypeptide is Neuromodulin (GAP43) (Felis catus (Cat)).